Consider the following 131-residue polypeptide: Interleukin-13 (131 aa).

The signal sequence occupies residues 1 to 18 (MALWLTLVIALTCFGGLA). N-linked (GlcNAc...) asparagine glycosylation is found at N39, N50, N58, and N74. 2 disulfide bridges follow: C49-C78 and C66-C92.

It belongs to the IL-4/IL-13 family. As to quaternary structure, interacts with IL13RA2.

Its subcellular location is the secreted. Its function is as follows. Cytokine that plays important roles in allergic inflammation and immune response to parasite infection. Synergizes with IL2 in regulating interferon-gamma synthesis. Stimulates B-cell proliferation, and activation of eosinophils, basophils, and mast cells. Plays an important role in controlling IL33 activity by modulating the production of transmembrane and soluble forms of interleukin-1 receptor-like 1/IL1RL1. Displays the capacity to antagonize Th1-driven proinflammatory immune response and downregulates synthesis of many proinflammatory cytokines including IL1, IL6, IL10, IL12 and TNF-alpha through a mechanism that partially involves suppression of NF-kappa-B. Also functions on nonhematopoietic cells, including endothelial cells where it induces vascular cell adhesion protein 1/VCAM1, which is important in the recruitment of eosinophils. Exerts its biological effects through its receptors which comprises the IL4R chain and the IL13RA1 chain, to activate JAK1 and TYK2, leading to the activation of STAT6. Aside from IL13RA1, another receptor IL13RA2 acts as a high affinity decoy for IL13 and mediates internalization and depletion of extracellular IL13. This chain is Interleukin-13 (IL13), found in Sus scrofa (Pig).